The chain runs to 367 residues: Homoserine O-acetyltransferase (367 aa).

In terms of domain architecture, AB hydrolase-1 spans 44–350 (NAIMVTHAWT…AYGHDAFLLE (307 aa)). The Nucleophile role is filled by Ser-150. Arg-217 contacts substrate. Catalysis depends on residues Asp-311 and His-344. Asp-345 provides a ligand contact to substrate.

Belongs to the AB hydrolase superfamily. MetX family. As to quaternary structure, homodimer.

Its subcellular location is the cytoplasm. It carries out the reaction L-homoserine + acetyl-CoA = O-acetyl-L-homoserine + CoA. Its pathway is amino-acid biosynthesis; L-methionine biosynthesis via de novo pathway; O-acetyl-L-homoserine from L-homoserine: step 1/1. Functionally, transfers an acetyl group from acetyl-CoA to L-homoserine, forming acetyl-L-homoserine. The sequence is that of Homoserine O-acetyltransferase from Geotalea daltonii (strain DSM 22248 / JCM 15807 / FRC-32) (Geobacter daltonii).